Consider the following 358-residue polypeptide: 3-dehydroquinate synthase (358 aa).

NAD(+) contacts are provided by residues 70–75 (DGEQYK), 104–108 (GVIGD), 128–129 (TT), lysine 141, lysine 150, and 168–171 (CLHT). Zn(2+) contacts are provided by glutamate 183, histidine 246, and histidine 263.

It belongs to the sugar phosphate cyclases superfamily. Dehydroquinate synthase family. It depends on Co(2+) as a cofactor. Zn(2+) is required as a cofactor. NAD(+) serves as cofactor.

The protein resides in the cytoplasm. The catalysed reaction is 7-phospho-2-dehydro-3-deoxy-D-arabino-heptonate = 3-dehydroquinate + phosphate. It participates in metabolic intermediate biosynthesis; chorismate biosynthesis; chorismate from D-erythrose 4-phosphate and phosphoenolpyruvate: step 2/7. Catalyzes the conversion of 3-deoxy-D-arabino-heptulosonate 7-phosphate (DAHP) to dehydroquinate (DHQ). In Shewanella loihica (strain ATCC BAA-1088 / PV-4), this protein is 3-dehydroquinate synthase.